A 73-amino-acid chain; its full sequence is Large ribosomal subunit protein bL32c (73 aa).

The protein belongs to the bacterial ribosomal protein bL32 family.

It localises to the plastid. It is found in the chloroplast. This Jasminum nudiflorum (Winter jasmine) protein is Large ribosomal subunit protein bL32c.